A 261-amino-acid chain; its full sequence is Potassium/proton antiporter CemA (261 aa).

A run of 3 helical transmembrane segments spans residues 138–158 (IISH…CLIL), 186–206 (ILLV…ELMI), and 221–241 (IISG…KYWI).

The protein belongs to the CemA family.

Its subcellular location is the plastid. The protein localises to the chloroplast inner membrane. The enzyme catalyses K(+)(in) + H(+)(out) = K(+)(out) + H(+)(in). Contributes to K(+)/H(+) antiport activity by supporting proton efflux to control proton extrusion and homeostasis in chloroplasts in a light-dependent manner to modulate photosynthesis. Prevents excessive induction of non-photochemical quenching (NPQ) under continuous-light conditions. Indirectly promotes efficient inorganic carbon uptake into chloroplasts. The sequence is that of Potassium/proton antiporter CemA from Cryptomeria japonica (Japanese cedar).